Reading from the N-terminus, the 466-residue chain is Soluble pyridine nucleotide transhydrogenase (466 aa).

An FAD-binding site is contributed by 36–45 (ERYHNVGGGC).

It belongs to the class-I pyridine nucleotide-disulfide oxidoreductase family. FAD serves as cofactor.

It is found in the cytoplasm. It carries out the reaction NAD(+) + NADPH = NADH + NADP(+). Conversion of NADPH, generated by peripheral catabolic pathways, to NADH, which can enter the respiratory chain for energy generation. In Citrobacter koseri (strain ATCC BAA-895 / CDC 4225-83 / SGSC4696), this protein is Soluble pyridine nucleotide transhydrogenase.